The chain runs to 94 residues: Trp operon repressor homolog (94 aa).

A DNA-binding region spans residues 58–81 (QREIAEKYGVSIAQITRGSNALKG).

This sequence belongs to the TrpR family. In terms of assembly, homodimer.

It localises to the cytoplasm. Its function is as follows. This protein is an aporepressor. When complexed with L-tryptophan it binds the operator region of the trp operon and prevents the initiation of transcription. In Chlamydia trachomatis serovar A (strain ATCC VR-571B / DSM 19440 / HAR-13), this protein is Trp operon repressor homolog.